Reading from the N-terminus, the 1858-residue chain is Inactive histone-lysine N-methyltransferase 2E (1858 aa).

An HCFC1-binding motif (HBM) motif is present at residues 63–66 (DHNY). The PHD-type zinc finger occupies 118–166 (VTRCICGFTHDDGYMICCDKCSVWQHIDCMGIDRQHIPDTYLCERCQPR). 8 residues coordinate Zn(2+): cysteine 121, cysteine 123, cysteine 135, cysteine 138, histidine 143, cysteine 146, cysteine 160, and cysteine 163. Residues 217–269 (ASRVSKVNDKRRKKSGEKEQHISKCKKAFREGSRKSSRVKGSAPEIDPSSDGS) form a disordered region. Residues 232–250 (GEKEQHISKCKKAFREGSR) show a composition bias toward basic and acidic residues. In terms of domain architecture, SET spans 330–447 (PPVESHIQKN…KGTEITIAFD (118 aa)). O-linked (GlcNAc) serine glycosylation is present at serine 435. O-linked (GlcNAc) threonine glycosylation is present at threonine 440. A disordered region spans residues 475-530 (SESMENINSGYETRRKKGKKDKDISKEKDTQNQNITLDCEGTTNKMKSPETKQRKL). The span at 494–504 (KDKDISKEKDT) shows a compositional bias: basic and acidic residues. Positions 505 to 520 (QNQNITLDCEGTTNKM) are enriched in polar residues. Positions 559–615 (VEMESEEQIAERKRKMTREERKMEAILQAFARLEKREKRREQALERISTAKTEVKTE) form a coiled coil. Serine 623 carries the post-translational modification Phosphoserine. Positions 630–687 (EQAKEENASKPTPAKVNRTKQRKSFSRSRTHIGQQRRRHRTVSMCSDIQPSSPDIEVT) are disordered. Residues 646 to 670 (NRTKQRKSFSRSRTHIGQQRRRHRT) show a composition bias toward basic residues. Polar residues predominate over residues 672–687 (SMCSDIQPSSPDIEVT). Serine 837 and serine 845 each carry phosphoserine. Low complexity-rich tracts occupy residues 887 to 901 (TSTPTPSPYATPTHT) and 933 to 957 (PVTPVTPGTPGNTMHFENISSPESS). Disordered stretches follow at residues 887–960 (TSTP…SPEI) and 1039–1068 (LETPAHDRAEPNSQLDSTHSGRGTMYSSWV). Over residues 1039–1048 (LETPAHDRAE) the composition is skewed to basic and acidic residues. Residues 1049–1068 (PNSQLDSTHSGRGTMYSSWV) are compositionally biased toward polar residues. Residue serine 1070 is modified to Phosphoserine. Disordered stretches follow at residues 1164–1561 (KRQR…QNQQ) and 1581–1835 (VFTS…PVPG). Composition is skewed to polar residues over residues 1186 to 1206 (PHASGSLSNNGDGCASSNDNG) and 1222 to 1235 (TVYNATSEETSNNC). Phosphoserine is present on serine 1273. Basic and acidic residues predominate over residues 1273–1282 (SDHRKDKDSG). Low complexity-rich tracts occupy residues 1285-1303 (SPCVSCSPSHVQSSPSSHS) and 1349-1362 (KSPPKMSKPGSPGS). At serine 1359 the chain carries Phosphoserine. Composition is skewed to polar residues over residues 1400 to 1432 (QQKQLSNNNQALSKNHPPQTHVRNSSEQLSQKL) and 1506 to 1542 (LPANTQQATSGTLFTQTPSGQSSATYSQFNQQSLNST). The span at 1543–1553 (APPPPPPPPPS) shows a compositional bias: pro residues. Over residues 1581–1599 (VFTSGPNQALPGTTSQQTV) the composition is skewed to polar residues. Residues 1626–1637 (VPPPPPPPPAPG) are compositionally biased toward pro residues. Residues 1642 to 1651 (QQPNSHQQHS) show a composition bias toward polar residues. The segment covering 1677–1687 (LPPPPPPPGPA) has biased composition (pro residues). Over residues 1698–1711 (TGLQGLQAQHQHVV) the composition is skewed to polar residues. Residues 1714–1724 (APPPPPPPPPS) show a composition bias toward pro residues. A compositionally biased stretch (polar residues) spans 1798–1808 (QGPNSIPTPTA).

This sequence belongs to the class V-like SAM-binding methyltransferase superfamily. Histone-lysine methyltransferase family. TRX/MLL subfamily. Component of a complex composed of KMT2E (isoform 3), OGT and USP7; the complex stabilizes KMT2E, preventing KMT2E ubiquitination and proteasomal-mediated degradation. Isoform 3 interacts (via N-terminus) with OGT (via TRP repeats). Isoform 3 interacts with deubiquitinating enzyme USP7 (via MATH domain). Isoform 3 interacts (via HBM motif) with HCFC1 (via Kelch domain). Isoform 3 interacts with E2F1; the interaction is probably indirect and is mediated via HCFC1. Post-translationally, ubiquitinated. Deubiquitinated by USP7. O-glycosylated at Ser-435 and Thr-440 in the SET domain by OGT which probably prevents KMT2E proteasomal-mediated degradation. In terms of tissue distribution, widely expressed in both adult and fetal tissues. Highest levels of expression observed in fetal thymus and kidney and in adult hematopoietic tissues, jejunum and cerebellum. Isoform NKp44L: Not detected on circulating cells from healthy individuals, but is expressed on a large panel of tumor and transformed cells.

It localises to the chromosome. Its subcellular location is the cytoplasm. The protein resides in the cytoskeleton. It is found in the microtubule organizing center. The protein localises to the centrosome. It localises to the nucleus speckle. Its subcellular location is the nucleus. The protein resides in the nucleoplasm. It is found in the cell membrane. In terms of biological role, associates with chromatin regions downstream of transcriptional start sites of active genes and thus regulates gene transcription. Chromatin interaction is mediated via the binding to tri-methylated histone H3 at 'Lys-4' (H3K4me3). Key regulator of hematopoiesis involved in terminal myeloid differentiation and in the regulation of hematopoietic stem cell (HSCs) self-renewal by a mechanism that involves DNA methylation. Also acts as an important cell cycle regulator, participating in cell cycle regulatory network machinery at multiple cell cycle stages including G1/S transition, S phase progression and mitotic entry. Recruited to E2F1 responsive promoters by HCFC1 where it stimulates tri-methylation of histone H3 at 'Lys-4' and transcriptional activation and thereby facilitates G1 to S phase transition. During myoblast differentiation, required to suppress inappropriate expression of S-phase-promoting genes and maintain expression of determination genes in quiescent cells. Cellular ligand for NCR2/NKp44, may play a role as a danger signal in cytotoxicity and NK-cell-mediated innate immunity. The protein is Inactive histone-lysine N-methyltransferase 2E (KMT2E) of Homo sapiens (Human).